We begin with the raw amino-acid sequence, 890 residues long: Kinesin-like protein KIF20A (890 aa).

At Ser2 the chain carries N-acetylserine. Residues Ser7, Ser14, and Ser21 each carry the phosphoserine modification. Residues 64-507 (KVKVYLRVRP…AKFSAIASQL (444 aa)) form the Kinesin motor domain. Position 160–167 (160–167 (GVTNSGKT)) interacts with ATP. At Ser528 the chain carries Phosphoserine; by PLK1. A phosphoserine mark is found at Ser532, Ser662, Ser668, Ser685, and Ser825. The stretch at 611 to 762 (LDTQKELLEE…ESLQSAERAC (152 aa)) forms a coiled coil. Residues 763–890 (CHSTGAGKLR…LKSGPFGKKY (128 aa)) are globular. Residues 832–865 (TNQENQQPNQQPPGKKPFLRNLLPRTPTCQSSTD) are disordered. Thr857 carries the post-translational modification Phosphothreonine. A phosphoserine mark is found at Ser867, Ser878, and Ser883.

Belongs to the TRAFAC class myosin-kinesin ATPase superfamily. Kinesin family. In terms of processing, phosphorylated by PLK1 at Ser-528 during mitosis, creating a docking site for PLK1 and recruiting PLK1 at central spindle.

It is found in the golgi apparatus. Its subcellular location is the cytoplasm. It localises to the cytoskeleton. The protein localises to the spindle. Functionally, mitotic kinesin required for chromosome passenger complex (CPC)-mediated cytokinesis. Following phosphorylation by PLK1, involved in recruitment of PLK1 to the central spindle. Interacts with guanosine triphosphate (GTP)-bound forms of RAB6A and RAB6B. May act as a motor required for the retrograde RAB6 regulated transport of Golgi membranes and associated vesicles along microtubules. Has a microtubule plus end-directed motility. This chain is Kinesin-like protein KIF20A (KIF20A), found in Homo sapiens (Human).